The primary structure comprises 248 residues: Isoprenyl transferase (248 aa).

Aspartate 28 is a catalytic residue. Aspartate 28 contributes to the Mg(2+) binding site. Substrate contacts are provided by residues 29–32 (GNGR), tryptophan 33, arginine 41, histidine 45, and 73–75 (SSE). Catalysis depends on asparagine 76, which acts as the Proton acceptor. Substrate is bound by residues tryptophan 77, arginine 79, arginine 196, and 202-204 (RLS). A Mg(2+)-binding site is contributed by glutamate 215.

It belongs to the UPP synthase family. As to quaternary structure, homodimer. Requires Mg(2+) as cofactor.

Its function is as follows. Catalyzes the condensation of isopentenyl diphosphate (IPP) with allylic pyrophosphates generating different type of terpenoids. The protein is Isoprenyl transferase of Zymomonas mobilis subsp. mobilis (strain ATCC 31821 / ZM4 / CP4).